Reading from the N-terminus, the 159-residue chain is NADH-quinone oxidoreductase subunit I (159 aa).

4Fe-4S ferredoxin-type domains lie at 51–80 (RRYE…IEAE) and 90–119 (TRYD…EGPN). Positions 60, 63, 66, 70, 99, 102, 105, and 109 each coordinate [4Fe-4S] cluster.

This sequence belongs to the complex I 23 kDa subunit family. In terms of assembly, NDH-1 is composed of 14 different subunits. Subunits NuoA, H, J, K, L, M, N constitute the membrane sector of the complex. [4Fe-4S] cluster is required as a cofactor.

The protein localises to the cell inner membrane. It carries out the reaction a quinone + NADH + 5 H(+)(in) = a quinol + NAD(+) + 4 H(+)(out). NDH-1 shuttles electrons from NADH, via FMN and iron-sulfur (Fe-S) centers, to quinones in the respiratory chain. The immediate electron acceptor for the enzyme in this species is believed to be ubiquinone. Couples the redox reaction to proton translocation (for every two electrons transferred, four hydrogen ions are translocated across the cytoplasmic membrane), and thus conserves the redox energy in a proton gradient. The polypeptide is NADH-quinone oxidoreductase subunit I (Rickettsia canadensis (strain McKiel)).